Consider the following 174-residue polypeptide: Gamma-crystallin C (174 aa).

Beta/gamma crystallin 'Greek key' domains are found at residues 2–40 (GKIT…RVDS) and 41–83 (GCWM…CLIP). The residue at position 23 (cysteine 23) is an S-methylcysteine. The connecting peptide stretch occupies residues 84 to 87 (QTSS). Beta/gamma crystallin 'Greek key' domains follow at residues 88-128 (HRLR…HVLE) and 129-171 (GCWV…RRVV).

This sequence belongs to the beta/gamma-crystallin family. As to quaternary structure, monomer.

Functionally, crystallins are the dominant structural components of the vertebrate eye lens. This chain is Gamma-crystallin C (CRYGC), found in Canis lupus familiaris (Dog).